A 120-amino-acid polypeptide reads, in one-letter code: Large ribosomal subunit protein uL18 (120 aa).

It belongs to the universal ribosomal protein uL18 family. In terms of assembly, part of the 50S ribosomal subunit; part of the 5S rRNA/L5/L18/L25 subcomplex. Contacts the 5S and 23S rRNAs.

Functionally, this is one of the proteins that bind and probably mediate the attachment of the 5S RNA into the large ribosomal subunit, where it forms part of the central protuberance. This is Large ribosomal subunit protein uL18 from Bartonella tribocorum (strain CIP 105476 / IBS 506).